Consider the following 136-residue polypeptide: ATP synthase F(0) complex subunit C1, mitochondrial (136 aa).

The N-terminal 61 residues, 1 to 61 (MQTTGALLIS…REFQTSVVSR (61 aa)), are a transit peptide targeting the mitochondrion. A helical transmembrane segment spans residues 77–97 (VGVAGSGAGIGTVFGSLIIGY). Lys-104 carries the post-translational modification N6,N6,N6-trimethyllysine. The chain crosses the membrane as a helical span at residues 112–132 (ILGFALSEAMGLFCLMVAFLI).

This sequence belongs to the ATPase C chain family. In terms of assembly, homooctamer; the c-ring consists of eight c subunits forming a circle, and each subunit adopts a hairpin shape. Component of the ATP synthase complex composed at least of ATP5F1A/subunit alpha, ATP5F1B/subunit beta, ATP5MC1/subunit c (homooctomer), MT-ATP6/subunit a, MT-ATP8/subunit 8, ATP5ME/subunit e, ATP5MF/subunit f, ATP5MG/subunit g, ATP5MK/subunit k, ATP5MJ/subunit j, ATP5F1C/subunit gamma, ATP5F1D/subunit delta, ATP5F1E/subunit epsilon, ATP5PF/subunit F6, ATP5PB/subunit b, ATP5PD/subunit d, ATP5PO/subunit OSCP. ATP synthase complex consists of a soluble F(1) head domain (subunits alpha(3) and beta(3)) - the catalytic core - and a membrane F(0) domain - the membrane proton channel (subunits c, a, 8, e, f, g, k and j). These two domains are linked by a central stalk (subunits gamma, delta, and epsilon) rotating inside the F1 region and a stationary peripheral stalk (subunits F6, b, d, and OSCP). Interacts with TMEM70 (homooligomer form); this interaction facilitates the oligomer formation of subunit c/ATP5MC1 (c-ring) and the c-ring membrane insertion and also protects ATP5MC1 against intramitochondrial proteolysis. In terms of processing, trimethylated by ATPSCKMT at Lys-104. Methylation is required for proper incorporation of the C subunit into the ATP synthase complex and mitochondrial respiration.

Its subcellular location is the mitochondrion membrane. The enzyme catalyses H(+)(in) = H(+)(out). Subunit c, of the mitochondrial membrane ATP synthase complex (F(1)F(0) ATP synthase or Complex V) that produces ATP from ADP in the presence of a proton gradient across the membrane which is generated by electron transport complexes of the respiratory chain. ATP synthase complex consist of a soluble F(1) head domain - the catalytic core - and a membrane F(1) domain - the membrane proton channel. These two domains are linked by a central stalk rotating inside the F(1) region and a stationary peripheral stalk. During catalysis, ATP synthesis in the catalytic domain of F(1) is coupled via a rotary mechanism of the central stalk subunits to proton translocation. With the subunit a (MT-ATP6), forms the proton-conducting channel in the F(0) domain, that contains two crucial half-channels (inlet and outlet) that facilitate proton movement from the mitochondrial intermembrane space (IMS) into the matrix. Protons are taken up via the inlet half-channel and released through the outlet half-channel, following a Grotthuss mechanism. The sequence is that of ATP synthase F(0) complex subunit C1, mitochondrial from Bos taurus (Bovine).